The sequence spans 1003 residues: Rho-associated protein kinase 1 (1003 aa).

The interval 1 to 28 is disordered; sequence VAPVVPDLSSDIDTSNFDDLEEDKGEEE. Positions 1–58 constitute an AGC-kinase C-terminal domain; sequence VAPVVPDLSSDIDTSNFDDLEEDKGEEETFPIPKAFVGNQLPFVGFTYYSNRRYLSSA. Residues 16 to 28 show a composition bias toward acidic residues; that stretch reads NFDDLEEDKGEEE. The tract at residues 17-376 is interaction with FHOD1; it reads FDDLEEDKGE…KKLKEEREAR (360 aa). A coiled-coil region spans residues 71–341; that stretch reads KSLQESLQKT…RLEQEVNEHK (271 aa). One can recognise an REM-1 domain in the interval 128–205; sequence STVSQIEKEK…LEEANDLLRT (78 aa). N6-acetyllysine is present on Lys296. The tract at residues 356-595 is SHROOM3 binding; that stretch reads EAKSVAMCEM…TVSRLEEANS (240 aa). The RhoBD domain occupies 598–664; sequence TKDIEILRRE…LAEIMNRKDF (67 aa). An RHOA binding region spans residues 647 to 659; the sequence is LKTQAVNKLAEIM. Residues 660 to 751 adopt a coiled-coil conformation; it reads NRKDFKIDRK…KLLDLSDSTS (92 aa). A phosphoserine mark is found at Ser754 and Ser757. Residues 764–1003 form an auto-inhibitory region; the sequence is NLPESRIEGW…VVKNTSGKTR (240 aa). In terms of domain architecture, PH spans 767 to 966; the sequence is ESRIEGWLSV…WVTHLVKKIP (200 aa). The segment at 877–930 adopts a Phorbol-ester/DAG-type zinc-finger fold; it reads GHEFIPTLYHFPANCDACAKPLWHVFKPPPALECRRCHVKCHRDHLDKKEDLIC. A disordered region spans residues 968 to 1003; sequence NPPSGFVRASPRTLSTRSTANQSFRKVVKNTSGKTR. Position 977 is a phosphoserine (Ser977). Polar residues predominate over residues 979-1003; sequence RTLSTRSTANQSFRKVVKNTSGKTR.

This sequence belongs to the protein kinase superfamily. AGC Ser/Thr protein kinase family. In terms of assembly, homodimer. Interacts with RHOA (activated by GTP), RHOB, RHOC, GEM, MYLC2B, RHOE, PPP1R12A, LIMK1, LIMK2, TSG101, CHORDC1, DAPK3, PFN1, PTEN and JIP3. Interacts with ITGB1BP1 (via N-terminus and PTB domain). Interacts with FHOD1 in a Src-dependent manner. Interacts with SHROOM3. Mg(2+) serves as cofactor. In terms of processing, autophosphorylated on serine and threonine residues. Cleaved by caspase-3 during apoptosis. This leads to constitutive activation of the kinase and membrane blebbing.

It localises to the cytoplasm. The protein localises to the cytoskeleton. It is found in the microtubule organizing center. The protein resides in the centrosome. Its subcellular location is the centriole. It localises to the golgi apparatus membrane. The protein localises to the cell projection. It is found in the bleb. The protein resides in the cell membrane. Its subcellular location is the lamellipodium. It localises to the ruffle. It catalyses the reaction L-seryl-[protein] + ATP = O-phospho-L-seryl-[protein] + ADP + H(+). The enzyme catalyses L-threonyl-[protein] + ATP = O-phospho-L-threonyl-[protein] + ADP + H(+). With respect to regulation, activated by RHOA binding. Inhibited by Y-27632. Its function is as follows. Protein kinase which is a key regulator of actin cytoskeleton and cell polarity. Involved in regulation of smooth muscle contraction, actin cytoskeleton organization, stress fiber and focal adhesion formation, neurite retraction, cell adhesion and motility via phosphorylation of DAPK3, GFAP, LIMK1, LIMK2, MYL9/MLC2, TPPP, PFN1 and PPP1R12A. Phosphorylates FHOD1 and acts synergistically with it to promote SRC-dependent non-apoptotic plasma membrane blebbing. Phosphorylates JIP3 and regulates the recruitment of JNK to JIP3 upon UVB-induced stress. Acts as a suppressor of inflammatory cell migration by regulating PTEN phosphorylation and stability. Acts as a negative regulator of VEGF-induced angiogenic endothelial cell activation. Required for centrosome positioning and centrosome-dependent exit from mitosis. Plays a role in terminal erythroid differentiation. May regulate closure of the eyelids and ventral body wall by inducing the assembly of actomyosin bundles. Promotes keratinocyte terminal differentiation. Involved in osteoblast compaction through the fibronectin fibrillogenesis cell-mediated matrix assembly process, essential for osteoblast mineralization. In Pan troglodytes (Chimpanzee), this protein is Rho-associated protein kinase 1 (ROCK1).